The chain runs to 602 residues: Aryl hydrocarbon receptor protein 1 (602 aa).

Residues 1–2 (MY) constitute a propeptide that is removed on maturation. Residues 1–12 (MYASKRRQRNFK) are compositionally biased toward basic residues. The tract at residues 1–28 (MYASKRRQRNFKRVRDPPKQLTNTNPSK) is disordered. Short sequence motifs (nuclear localization signal) lie at residues 5-8 (KRRQ) and 28-33 (KRHRER). The 54-residue stretch at 18–71 (PKQLTNTNPSKRHRERLNGELETVAMLLPYDSSTISRLDKLSVLRLAVSFLQCK) folds into the bHLH domain. Required for maintaining the overall integrity of the AHR:ARNT heterodimer and its transcriptional activity stretches follow at residues 41-73 (VAMLLPYDSSTISRLDKLSVLRLAVSFLQCKAH), 133-141 (SLKSLGGFI), and 266-268 (ICV). The short motif at 55-63 (LDKLSVLRL) is the Nuclear export signal element. The PAS domain occupies 126 to 196 (ESNFEEISLK…QQLDSNFHIP (71 aa)). The tract at residues 440–467 (STSNSLFPSVPVPTPTTTKANRRRKENS) is disordered.

As to quaternary structure, interacts with daf-21/hsp90. Interacts with aha-1. As to expression, expressed in many distinct neuronal cells including RMED, RMEV, RMEL and RMER. Functions in URX neurons to promote aggregation behavior.

It is found in the nucleus. In terms of biological role, probable ligand-activated transcriptional activator. Acts as a transcriptional regulator in GABAergic motor neuron cell fate specification and development. Promotes cell-type-specific expression of guanylate cyclase genes that have key roles in aggregation behavior and hyperoxia avoidance. Has no role in carbon dioxide avoidance. The protein is Aryl hydrocarbon receptor protein 1 of Caenorhabditis elegans.